The following is a 193-amino-acid chain: General stress protein 16U (193 aa).

The protein belongs to the CAPAB/TerDEXZ family.

This is General stress protein 16U (yceD) from Bacillus subtilis (strain 168).